A 519-amino-acid polypeptide reads, in one-letter code: Probable cytosol aminopeptidase (519 aa).

The Mn(2+) site is built by Lys283 and Asp288. The active site involves Lys295. 3 residues coordinate Mn(2+): Asp306, Asp365, and Glu367. Arg369 is an active-site residue.

It belongs to the peptidase M17 family. Mn(2+) is required as a cofactor.

Its subcellular location is the cytoplasm. It carries out the reaction Release of an N-terminal amino acid, Xaa-|-Yaa-, in which Xaa is preferably Leu, but may be other amino acids including Pro although not Arg or Lys, and Yaa may be Pro. Amino acid amides and methyl esters are also readily hydrolyzed, but rates on arylamides are exceedingly low.. It catalyses the reaction Release of an N-terminal amino acid, preferentially leucine, but not glutamic or aspartic acids.. Functionally, presumably involved in the processing and regular turnover of intracellular proteins. Catalyzes the removal of unsubstituted N-terminal amino acids from various peptides. The chain is Probable cytosol aminopeptidase from Mycobacterium ulcerans (strain Agy99).